The sequence spans 103 residues: UPF0145 protein PERMA_0324 (103 aa).

It belongs to the UPF0145 family.

The polypeptide is UPF0145 protein PERMA_0324 (Persephonella marina (strain DSM 14350 / EX-H1)).